The following is a 208-amino-acid chain: NAD(P)H-hydrate epimerase (208 aa).

Residues Ile10–Asn208 enclose the YjeF N-terminal domain. (6S)-NADPHX is bound at residue Asn54 to Asp58. 2 residues coordinate K(+): Asn55 and Asp117. (6S)-NADPHX is bound by residues Gly121 to Pro127 and Asp150. Position 153 (Ser153) interacts with K(+).

It belongs to the NnrE/AIBP family. It depends on K(+) as a cofactor.

The catalysed reaction is (6R)-NADHX = (6S)-NADHX. The enzyme catalyses (6R)-NADPHX = (6S)-NADPHX. Functionally, catalyzes the epimerization of the S- and R-forms of NAD(P)HX, a damaged form of NAD(P)H that is a result of enzymatic or heat-dependent hydration. This is a prerequisite for the S-specific NAD(P)H-hydrate dehydratase to allow the repair of both epimers of NAD(P)HX. This is NAD(P)H-hydrate epimerase from Achromobacter xylosoxidans (strain A8).